We begin with the raw amino-acid sequence, 445 residues long: Putative ATP-dependent RNA helicase L538 (445 aa).

The 138-residue stretch at 14-151 folds into the Helicase ATP-binding domain; it reads IEFMKNNRGV…AVLVNIVRGE (138 aa). Residue 27–34 coordinates ATP; the sequence is HSTGAGKT. A DEAH box motif is present at residues 101 to 104; the sequence is DEAH. Positions 273-442 constitute a Helicase C-terminal domain; that stretch reads KIEDIMKYII…VIDASIENNY (170 aa).

It belongs to the DEAD box helicase family. DEAH subfamily.

It localises to the virion. The enzyme catalyses ATP + H2O = ADP + phosphate + H(+). The polypeptide is Putative ATP-dependent RNA helicase L538 (Acanthamoeba polyphaga mimivirus (APMV)).